The sequence spans 286 residues: GTP cyclohydrolase MptA (286 aa).

It belongs to the GTP cyclohydrolase IV family. As to quaternary structure, homodimer. Requires Fe(2+) as cofactor.

It carries out the reaction GTP + H2O = 7,8-dihydroneopterin 2',3'-cyclic phosphate + formate + diphosphate + H(+). Its pathway is cofactor biosynthesis; 5,6,7,8-tetrahydromethanopterin biosynthesis. Functionally, converts GTP to 7,8-dihydro-D-neopterin 2',3'-cyclic phosphate, the first intermediate in the biosynthesis of coenzyme methanopterin. The protein is GTP cyclohydrolase MptA of Thermoplasma acidophilum (strain ATCC 25905 / DSM 1728 / JCM 9062 / NBRC 15155 / AMRC-C165).